The sequence spans 243 residues: MRCISCREEYLPRNAGTCKECYVEAGETEEELKREIDDLKAKVAFLRLSSSLDHGTSSTSRSFTDVVLIASEDNAGSPPIPAHKSVLVSRSPVFKAMLENEMEESLSGTIKISDVSYDALRTFVYYLYTAEACLDEQMACDLLVMSEKYQVKHLKSYCERFLVTKLSPDNSLMTYAFAHQHNAKHVLDAALSQIVENMDKLTKREEYMELVEKDPRLIVEIYEAYLSKQVNTAAGGTSTSKTS.

Residues 19–51 are a coiled coil; it reads KECYVEAGETEEELKREIDDLKAKVAFLRLSSS. One can recognise a BTB domain in the interval 64-136; that stretch reads TDVVLIASED…LYTAEACLDE (73 aa).

As to quaternary structure, interacts with CUL3A and CUL3B.

The protein operates within protein modification; protein ubiquitination. Functionally, may act as a substrate-specific adapter of an E3 ubiquitin-protein ligase complex (CUL3-RBX1-BTB) which mediates the ubiquitination and subsequent proteasomal degradation of target proteins. The polypeptide is BTB/POZ domain-containing protein At4g08455 (Arabidopsis thaliana (Mouse-ear cress)).